The chain runs to 849 residues: Villin-1 (849 aa).

Gelsolin-like repeat units follow at residues 30-107 (IEKS…DKFL), 147-213 (RVTE…EDGK), 262-335 (VPVE…TVEF), 405-475 (QEQL…PEMF), and 527-566 (AIQVDLAASSLNSSHCYILQAGGSFFTWLGSLSSPSDHNL). Residues 739-849 (ETPERSLRKS…AVATGTPRRR (111 aa)) form a disordered region. Composition is skewed to low complexity over residues 747–782 (KSSSSSLPRRSPGTSSSEPTTPEQRAAARTFASAST) and 791–823 (PAALSPSLSTPSPSPRSRSSASSSPASWNSTPS).

The protein belongs to the villin/gelsolin family. As to expression, expressed in roots, young leaves, and inflorescences, mostly in the vasculature of roots, leaves, and filaments of the anthers. Also detected in guard cells.

The protein resides in the cytoplasm. It localises to the cytoskeleton. In terms of biological role, ca(2+)-independent actin-binding protein. Binds actin microfilaments (MFs). Involved in actin filament bundling, severing and capping. Caps the barbed end of actin filaments and protects them from disassembly. Promotes VLN3-mediated MF severing. The chain is Villin-1 from Oryza sativa subsp. japonica (Rice).